The sequence spans 511 residues: Pancreatic alpha-amylase (511 aa).

Positions 1–15 are cleaved as a signal peptide; the sequence is MKLFLLLSAFGFCWA. The residue at position 16 (Q16) is a Pyrrolidone carboxylic acid. Disulfide bonds link C43-C101, C85-C130, and C156-C175. N115, R173, and D182 together coordinate Ca(2+). R210 serves as a coordination point for chloride. D212 acts as the Nucleophile in catalysis. A Ca(2+)-binding site is contributed by H216. The active-site Proton donor is E248. Positions 313 and 352 each coordinate chloride. C393 and C399 are joined by a disulfide. N-linked (GlcNAc...) asparagine glycosylation is present at N427. A disulfide bridge links C465 with C477.

Belongs to the glycosyl hydrolase 13 family. In terms of assembly, binds to the sea anemone inhibitor helianthamide and magnificamide. The cofactor is Ca(2+). It depends on chloride as a cofactor.

Its subcellular location is the secreted. It localises to the extracellular space. The enzyme catalyses Endohydrolysis of (1-&gt;4)-alpha-D-glucosidic linkages in polysaccharides containing three or more (1-&gt;4)-alpha-linked D-glucose units.. This Sus scrofa (Pig) protein is Pancreatic alpha-amylase (AMY2).